The sequence spans 222 residues: Riboflavin kinase (222 aa).

An H-T-H motif-like region spans residues 1 to 94; sequence METIDAEDAA…AKIFDVKDEQ (94 aa). The interval 95-222 is riboflavin kinase; that stretch reads YVLTGTVMSG…ENSEVVVVIG (128 aa). Position 104–109 (104–109) interacts with CDP; sequence GVGEGR. Residues Thr-133 and Asn-135 each coordinate Mg(2+). FMN is bound by residues Thr-190 and Glu-198. 203-206 serves as a coordination point for CDP; sequence TQLR.

The protein belongs to the archaeal riboflavin kinase family. Mg(2+) is required as a cofactor.

The catalysed reaction is riboflavin + CTP = CDP + FMN + H(+). It functions in the pathway cofactor biosynthesis; FMN biosynthesis; FMN from riboflavin (CTP route): step 1/1. Catalyzes the CTP-dependent phosphorylation of riboflavin (vitamin B2) to form flavin mononucleotide (FMN). This Methanocorpusculum labreanum (strain ATCC 43576 / DSM 4855 / Z) protein is Riboflavin kinase (ribK).